A 305-amino-acid chain; its full sequence is UDP-N-acetylenolpyruvoylglucosamine reductase (305 aa).

The FAD-binding PCMH-type domain occupies 35-214 (VGGPAQALFT…RARMNEVQAH (180 aa)). The active site involves Arg-179. The Proton donor role is filled by Ser-228. Residue Glu-298 is part of the active site.

This sequence belongs to the MurB family. Requires FAD as cofactor.

It localises to the cytoplasm. The catalysed reaction is UDP-N-acetyl-alpha-D-muramate + NADP(+) = UDP-N-acetyl-3-O-(1-carboxyvinyl)-alpha-D-glucosamine + NADPH + H(+). The protein operates within cell wall biogenesis; peptidoglycan biosynthesis. In terms of biological role, cell wall formation. The chain is UDP-N-acetylenolpyruvoylglucosamine reductase from Nitrobacter winogradskyi (strain ATCC 25391 / DSM 10237 / CIP 104748 / NCIMB 11846 / Nb-255).